The following is a 517-amino-acid chain: Ribose import ATP-binding protein RbsA 2 (517 aa).

2 ABC transporter domains span residues 10 to 245 (LRIE…GRSI) and 255 to 498 (DAGE…VSTH). 42 to 49 (GENGAGKS) provides a ligand contact to ATP. The interval 497 to 517 (THTGNSPHSGGTDGTEASRGH) is disordered.

Belongs to the ABC transporter superfamily. Ribose importer (TC 3.A.1.2.1) family. As to quaternary structure, the complex is composed of an ATP-binding protein (RbsA), two transmembrane proteins (RbsC) and a solute-binding protein (RbsB).

It localises to the cell membrane. It carries out the reaction D-ribose(out) + ATP + H2O = D-ribose(in) + ADP + phosphate + H(+). Part of the ABC transporter complex RbsABC involved in ribose import. Responsible for energy coupling to the transport system. In Streptomyces coelicolor (strain ATCC BAA-471 / A3(2) / M145), this protein is Ribose import ATP-binding protein RbsA 2.